Here is a 945-residue protein sequence, read N- to C-terminus: Alanine--tRNA ligase (945 aa).

His-564, His-568, Cys-666, and His-670 together coordinate Zn(2+). The tract at residues Ser-911 to Gly-945 is disordered.

This sequence belongs to the class-II aminoacyl-tRNA synthetase family. Zn(2+) serves as cofactor.

It is found in the cytoplasm. The enzyme catalyses tRNA(Ala) + L-alanine + ATP = L-alanyl-tRNA(Ala) + AMP + diphosphate. Its function is as follows. Catalyzes the attachment of alanine to tRNA(Ala) in a two-step reaction: alanine is first activated by ATP to form Ala-AMP and then transferred to the acceptor end of tRNA(Ala). Also edits incorrectly charged Ser-tRNA(Ala) and Gly-tRNA(Ala) via its editing domain. In Rhodopirellula baltica (strain DSM 10527 / NCIMB 13988 / SH1), this protein is Alanine--tRNA ligase.